Here is a 442-residue protein sequence, read N- to C-terminus: Probable diguanylate cyclase DgcI (442 aa).

The signal sequence occupies residues 1–23; it reads MSRINKFVLTVSLLIFIMISAVA. Cysteine 24 is lipidated: N-palmitoyl cysteine. Cysteine 24 carries the S-diacylglycerol cysteine lipid modification. The helical transmembrane segment at 231-251 threads the bilayer; it reads LIIFFAALVAVISGASCLYLV. In terms of domain architecture, GGDEF spans 319-442; that stretch reads KGGYLCLFDV…KNGRAQISWQ (124 aa). Position 327 (aspartate 327) interacts with Mg(2+). The substrate site is built by asparagine 335, histidine 340, and aspartate 344. Aspartate 371 is a Mg(2+) binding site.

As to quaternary structure, homodimer. Mg(2+) is required as a cofactor.

It localises to the cell membrane. The enzyme catalyses 2 GTP = 3',3'-c-di-GMP + 2 diphosphate. Its pathway is purine metabolism; 3',5'-cyclic di-GMP biosynthesis. In terms of biological role, catalyzes the synthesis of cyclic-di-GMP (c-di-GMP) via the condensation of 2 GTP molecules. This chain is Probable diguanylate cyclase DgcI, found in Escherichia coli (strain K12).